A 702-amino-acid polypeptide reads, in one-letter code: MADS-box MEF2 type transcription factor MIG1 (702 aa).

Residues 1–61 (MGRRKIEIKA…KKLYEYSSGD (61 aa)) form the MADS-box domain. 2 disordered regions span residues 73-608 (GGAT…NIDT) and 658-702 (PSFL…KVDS). Positions 86–96 (GGDDDDEEEGD) are enriched in acidic residues. Over residues 132-144 (ASPPIPNGVPFPP) the composition is skewed to pro residues. Residues 145–155 (HGHGVPRGHTP) are compositionally biased toward low complexity. The segment covering 180-195 (GSPQVNGFGFGQQQSM) has biased composition (polar residues). A compositionally biased stretch (pro residues) spans 201–241 (TTMPPHMPPQMAPGPPFPYPQHPQHPPHPPHPPHPPHPQQP). Low complexity-rich tracts occupy residues 273–284 (PMGMQRHSVSPP), 326–343 (ESPQ…QQPE), and 350–371 (EQQQ…QSEP). Positions 456-465 (VDESTSNASE) are enriched in polar residues. 2 stretches are compositionally biased toward low complexity: residues 487–512 (RASI…SLRA) and 530–553 (DGSG…DATS). The span at 554-567 (QSTRQNDSHSSTNM) shows a compositional bias: polar residues. Pro residues predominate over residues 587 to 600 (PPNPFAPKRPPQHP). Residues 693 to 702 (NEPKRVKVDS) show a composition bias toward basic and acidic residues.

The protein belongs to the MEF2 family. In terms of assembly, interacts with MAPK MPS1.

It localises to the nucleus. Functionally, transcription factor acting downstream of the MPS1 MAP kinase (MAPK) cascade during conidiation and plant infection. Required for overcoming plant defense responses and the differentiation of secondary infectious hyphae in live plant cells. The protein is MADS-box MEF2 type transcription factor MIG1 of Pyricularia oryzae (strain 70-15 / ATCC MYA-4617 / FGSC 8958) (Rice blast fungus).